A 191-amino-acid polypeptide reads, in one-letter code: Small ribosomal subunit protein uS7 (191 aa).

Residues 56–80 (NKSGEQGDGDGESGGKAGGIKKRSL) are disordered.

The protein belongs to the universal ribosomal protein uS7 family. In terms of assembly, part of the 30S ribosomal subunit. Contacts proteins S9 and S11.

Its function is as follows. One of the primary rRNA binding proteins, it binds directly to 16S rRNA where it nucleates assembly of the head domain of the 30S subunit. Is located at the subunit interface close to the decoding center, probably blocks exit of the E-site tRNA. This Coxiella burnetii (strain RSA 493 / Nine Mile phase I) protein is Small ribosomal subunit protein uS7.